The primary structure comprises 343 residues: Methionine import ATP-binding protein MetN (343 aa).

The region spanning 2–241 (ITLSHITKQF…PKTPLAQAFI (240 aa)) is the ABC transporter domain. 38–45 (GASGAGKS) is an ATP binding site.

It belongs to the ABC transporter superfamily. Methionine importer (TC 3.A.1.24) family. In terms of assembly, the complex is composed of two ATP-binding proteins (MetN), two transmembrane proteins (MetI) and a solute-binding protein (MetQ).

Its subcellular location is the cell inner membrane. It carries out the reaction L-methionine(out) + ATP + H2O = L-methionine(in) + ADP + phosphate + H(+). The enzyme catalyses D-methionine(out) + ATP + H2O = D-methionine(in) + ADP + phosphate + H(+). Functionally, part of the ABC transporter complex MetNIQ involved in methionine import. Responsible for energy coupling to the transport system. The sequence is that of Methionine import ATP-binding protein MetN from Sodalis glossinidius (strain morsitans).